A 193-amino-acid polypeptide reads, in one-letter code: CASP-like protein 1D1 (193 aa).

A disordered region spans residues 1 to 24 (MGYETKSTLDTERSTAPGTGTTTK). Over 1–30 (MGYETKSTLDTERSTAPGTGTTTKSCSMTQ) the chain is Cytoplasmic. A compositionally biased stretch (polar residues) spans 14 to 24 (STAPGTGTTTK). A helical transmembrane segment spans residues 31-51 (VVLRFVLFAATLTSIVVMVTS). At 52 to 76 (KQTKNIFLPGTPIRIPAAEFTNSPA) the chain is on the extracellular side. Residues 77–97 (LIYFVVALSVACFYSIVSTFV) traverse the membrane as a helical segment. Residues 98–108 (TVSAFKKHSCS) are Cytoplasmic-facing. Residues 109–129 (AVLLLNLAIMDAVMVGIVASA) form a helical membrane-spanning segment. The Extracellular portion of the chain corresponds to 130 to 162 (TGAGGGVAYLGLKGNKEVRWGKICHIYDKFCRH). The helical transmembrane segment at 163–183 (VGGAIAVSLFASVVLLLLSII) threads the bilayer. Over 184–193 (SVLSLYKKIR) the chain is Cytoplasmic.

The protein belongs to the Casparian strip membrane proteins (CASP) family. In terms of assembly, homodimer and heterodimers.

It is found in the cell membrane. The polypeptide is CASP-like protein 1D1 (Arabidopsis thaliana (Mouse-ear cress)).